Reading from the N-terminus, the 230-residue chain is Type II restriction enzyme NlaIII (230 aa).

The enzyme catalyses Endonucleolytic cleavage of DNA to give specific double-stranded fragments with terminal 5'-phosphates.. A P subtype restriction enzyme that recognizes the double-stranded sequence 5'-CATG-3' and cleaves after G-4. The sequence is that of Type II restriction enzyme NlaIII (nlaIIIR) from Neisseria lactamica.